The following is a 576-amino-acid chain: Proline--tRNA ligase (576 aa).

The protein belongs to the class-II aminoacyl-tRNA synthetase family. ProS type 1 subfamily. Homodimer.

It localises to the cytoplasm. It carries out the reaction tRNA(Pro) + L-proline + ATP = L-prolyl-tRNA(Pro) + AMP + diphosphate. Its function is as follows. Catalyzes the attachment of proline to tRNA(Pro) in a two-step reaction: proline is first activated by ATP to form Pro-AMP and then transferred to the acceptor end of tRNA(Pro). As ProRS can inadvertently accommodate and process non-cognate amino acids such as alanine and cysteine, to avoid such errors it has two additional distinct editing activities against alanine. One activity is designated as 'pretransfer' editing and involves the tRNA(Pro)-independent hydrolysis of activated Ala-AMP. The other activity is designated 'posttransfer' editing and involves deacylation of mischarged Ala-tRNA(Pro). The misacylated Cys-tRNA(Pro) is not edited by ProRS. This Thiobacillus denitrificans (strain ATCC 25259 / T1) protein is Proline--tRNA ligase.